Reading from the N-terminus, the 95-residue chain is Co-chaperonin GroES (95 aa).

This sequence belongs to the GroES chaperonin family. Heptamer of 7 subunits arranged in a ring. Interacts with the chaperonin GroEL.

Its subcellular location is the cytoplasm. Its function is as follows. Together with the chaperonin GroEL, plays an essential role in assisting protein folding. The GroEL-GroES system forms a nano-cage that allows encapsulation of the non-native substrate proteins and provides a physical environment optimized to promote and accelerate protein folding. GroES binds to the apical surface of the GroEL ring, thereby capping the opening of the GroEL channel. The protein is Co-chaperonin GroES of Ruegeria pomeroyi (strain ATCC 700808 / DSM 15171 / DSS-3) (Silicibacter pomeroyi).